The sequence spans 222 residues: Thiamine-phosphate synthase (222 aa).

Residues 44-48 and N75 each bind 4-amino-2-methyl-5-(diphosphooxymethyl)pyrimidine; that span reads QVRMK. 2 residues coordinate Mg(2+): D76 and D95. T114 contributes to the 4-amino-2-methyl-5-(diphosphooxymethyl)pyrimidine binding site. 140–142 contacts 2-[(2R,5Z)-2-carboxy-4-methylthiazol-5(2H)-ylidene]ethyl phosphate; the sequence is SRS. K143 provides a ligand contact to 4-amino-2-methyl-5-(diphosphooxymethyl)pyrimidine. Residue G171 coordinates 2-[(2R,5Z)-2-carboxy-4-methylthiazol-5(2H)-ylidene]ethyl phosphate.

It belongs to the thiamine-phosphate synthase family. The cofactor is Mg(2+).

It carries out the reaction 2-[(2R,5Z)-2-carboxy-4-methylthiazol-5(2H)-ylidene]ethyl phosphate + 4-amino-2-methyl-5-(diphosphooxymethyl)pyrimidine + 2 H(+) = thiamine phosphate + CO2 + diphosphate. It catalyses the reaction 2-(2-carboxy-4-methylthiazol-5-yl)ethyl phosphate + 4-amino-2-methyl-5-(diphosphooxymethyl)pyrimidine + 2 H(+) = thiamine phosphate + CO2 + diphosphate. The enzyme catalyses 4-methyl-5-(2-phosphooxyethyl)-thiazole + 4-amino-2-methyl-5-(diphosphooxymethyl)pyrimidine + H(+) = thiamine phosphate + diphosphate. Its pathway is cofactor biosynthesis; thiamine diphosphate biosynthesis; thiamine phosphate from 4-amino-2-methyl-5-diphosphomethylpyrimidine and 4-methyl-5-(2-phosphoethyl)-thiazole: step 1/1. Condenses 4-methyl-5-(beta-hydroxyethyl)thiazole monophosphate (THZ-P) and 2-methyl-4-amino-5-hydroxymethyl pyrimidine pyrophosphate (HMP-PP) to form thiamine monophosphate (TMP). The polypeptide is Thiamine-phosphate synthase (Anaeromyxobacter dehalogenans (strain 2CP-C)).